Here is a 272-residue protein sequence, read N- to C-terminus: Shikimate dehydrogenase (NADP(+)) (272 aa).

Shikimate contacts are provided by residues 14 to 16 (SKS) and T61. The active-site Proton acceptor is K65. E77 is an NADP(+) binding site. Positions 86 and 102 each coordinate shikimate. NADP(+) contacts are provided by residues 126–130 (GAGGA), 149–154 (NRTVSR), and M213. Residue Y215 participates in shikimate binding. G237 is an NADP(+) binding site.

It belongs to the shikimate dehydrogenase family. Homodimer.

The catalysed reaction is shikimate + NADP(+) = 3-dehydroshikimate + NADPH + H(+). It functions in the pathway metabolic intermediate biosynthesis; chorismate biosynthesis; chorismate from D-erythrose 4-phosphate and phosphoenolpyruvate: step 4/7. In terms of biological role, involved in the biosynthesis of the chorismate, which leads to the biosynthesis of aromatic amino acids. Catalyzes the reversible NADPH linked reduction of 3-dehydroshikimate (DHSA) to yield shikimate (SA). This chain is Shikimate dehydrogenase (NADP(+)), found in Escherichia coli (strain K12 / MC4100 / BW2952).